Consider the following 330-residue polypeptide: MATH domain and coiled-coil domain-containing protein At3g58210 (330 aa).

In terms of domain architecture, MATH spans 6 to 133 (DNKFTWVIQN…NDELKIVAEV (128 aa)). The stretch at 263–314 (FKVDWLEKKLEEVKKKKEEEQTGEARIQELEEELKEFKQKCLDREAMLEKEK) forms a coiled coil.

The chain is MATH domain and coiled-coil domain-containing protein At3g58210 from Arabidopsis thaliana (Mouse-ear cress).